A 37-amino-acid polypeptide reads, in one-letter code: Large ribosomal subunit protein bL36c (37 aa).

The protein belongs to the bacterial ribosomal protein bL36 family.

Its subcellular location is the plastid. The protein resides in the chloroplast. The sequence is that of Large ribosomal subunit protein bL36c from Physcomitrium patens (Spreading-leaved earth moss).